The primary structure comprises 304 residues: Large ribosomal subunit protein uL18y (304 aa).

It belongs to the universal ribosomal protein uL18 family. In terms of assembly, component of the large ribosomal subunit (LSU).

The protein localises to the cytoplasm. It is found in the nucleus. Functionally, component of the ribosome, a large ribonucleoprotein complex responsible for the synthesis of proteins in the cell. The small ribosomal subunit (SSU) binds messenger RNAs (mRNAs) and translates the encoded message by selecting cognate aminoacyl-transfer RNA (tRNA) molecules. The large subunit (LSU) contains the ribosomal catalytic site termed the peptidyl transferase center (PTC), which catalyzes the formation of peptide bonds, thereby polymerizing the amino acids delivered by tRNAs into a polypeptide chain. The nascent polypeptides leave the ribosome through a tunnel in the LSU and interact with protein factors that function in enzymatic processing, targeting, and the membrane insertion of nascent chains at the exit of the ribosomal tunnel. This chain is Large ribosomal subunit protein uL18y (RPL5B), found in Oryza sativa subsp. japonica (Rice).